The sequence spans 1229 residues: uncharacterized protein (1229 aa).

The first 19 residues, 1–19 (MKYFLLLFLLVLSFTLVES), serve as a signal peptide directing secretion. Residues N238, N270, N370, N538, N691, and N701 are each glycosylated (N-linked (GlcNAc...) asparagine). In terms of domain architecture, Galectin 1 spans 678-813 (RMVNFANVME…QWNIDTVKMN (136 aa)). The segment covering 818–829 (HTTTVEPSTPLE) has biased composition (polar residues). The tract at residues 818–903 (HTTTVEPSTP…TLPPTTTPYN (86 aa)) is disordered. The span at 830-846 (TASTSQSTPSATLTSTT) shows a compositional bias: low complexity. Polar residues predominate over residues 847 to 869 (ENIPSTSKIPETSTTQRPTSPIL). A compositionally biased stretch (low complexity) spans 870 to 901 (TSGATSTSSSTESTTTSPTTSTTTTLPPTTTP). N-linked (GlcNAc...) asparagine glycans are attached at residues N903, N938, and N948. The Galectin 2 domain maps to 925–1059 (RPVVFSRYME…ESTIDTVSMA (135 aa)). Residues 1061 to 1087 (VRPPTTPTTTTSTTTTTTPKLTTTSTL) form a disordered region. The span at 1067-1087 (PTTTTSTTTTTTPKLTTTSTL) shows a compositional bias: low complexity. N-linked (GlcNAc...) asparagine glycosylation occurs at N1146.

This is an uncharacterized protein from Caenorhabditis elegans.